The chain runs to 230 residues: Thiamine-triphosphatase (230 aa).

Alanine 2 carries the N-acetylalanine modification. The 197-residue stretch at 5–201 (LIEVERKFLP…AKLIVYLQRF (197 aa)) folds into the CYTH domain. Mg(2+)-binding residues include glutamate 7 and glutamate 9. Substrate contacts are provided by lysine 11, arginine 55, arginine 57, lysine 65, and arginine 125. Aspartate 145, glutamate 157, and glutamate 159 together coordinate Mg(2+). Residue glutamate 157 coordinates substrate. Residue lysine 193 coordinates substrate.

It belongs to the ThTPase family. As to quaternary structure, monomer. Mg(2+) is required as a cofactor. In terms of tissue distribution, widely expressed but at a low level.

It localises to the cytoplasm. The enzyme catalyses thiamine triphosphate + H2O = thiamine diphosphate + phosphate + H(+). In terms of biological role, hydrolase highly specific for thiamine triphosphate (ThTP). This chain is Thiamine-triphosphatase (THTPA), found in Homo sapiens (Human).